Reading from the N-terminus, the 350-residue chain is Putative aminopeptidase MJ0555 (350 aa).

The a divalent metal cation site is built by His62 and Asp175. The Proton acceptor role is filled by Glu207. Glu208, Asp230, and His321 together coordinate a divalent metal cation.

The protein belongs to the peptidase M42 family. It depends on a divalent metal cation as a cofactor.

This Methanocaldococcus jannaschii (strain ATCC 43067 / DSM 2661 / JAL-1 / JCM 10045 / NBRC 100440) (Methanococcus jannaschii) protein is Putative aminopeptidase MJ0555.